Reading from the N-terminus, the 436-residue chain is MNKQINSVAPMSDTTSEALSVDALAADCKAAARELSTLSTETKNRTLRRMADALEADEEAILAANGKDVSAAREEGLDDALIDRLVLNPDRITKMADALRDVASFADPVGEMGGTTKRPSGIEVGKMRIPLGVIGMIYEARPNVTADAAGLCFKAGNAVLLRGGSNAFHSNQAVAAALHTALEAEGVPPAAVTLIPTTDRAAVQEMLTLNQHLDLIIPRGGEGLIRFVDETSQIPVIKHYKGVCHLYVDEDADLEVAEDLLLDGKVSRPSVCNALETLLVHADVADDFLPRARALLDDAGVELRGDDRTRQLLPGVGAATEDDYAAEYLDLTLAARVVESDDEALNHIAEYGSNHTEVIVTDRLPTARRFVRSVDASVVLVNASSRFSDGGELGLGAEIGISTTKLHAYGPMGLEALTTEKFVVYGEGETRHPVEK.

This sequence belongs to the gamma-glutamyl phosphate reductase family.

It is found in the cytoplasm. The catalysed reaction is L-glutamate 5-semialdehyde + phosphate + NADP(+) = L-glutamyl 5-phosphate + NADPH + H(+). The protein operates within amino-acid biosynthesis; L-proline biosynthesis; L-glutamate 5-semialdehyde from L-glutamate: step 2/2. In terms of biological role, catalyzes the NADPH-dependent reduction of L-glutamate 5-phosphate into L-glutamate 5-semialdehyde and phosphate. The product spontaneously undergoes cyclization to form 1-pyrroline-5-carboxylate. The polypeptide is Gamma-glutamyl phosphate reductase (Salinibacter ruber (strain DSM 13855 / M31)).